The sequence spans 744 residues: Catalase A (744 aa).

Catalysis depends on residues histidine 93 and asparagine 166. Residue tyrosine 380 participates in heme binding.

This sequence belongs to the catalase family. Requires heme as cofactor.

It localises to the peroxisome matrix. The enzyme catalyses 2 H2O2 = O2 + 2 H2O. Functionally, catalyzes the degradation of hydrogen peroxide (H(2)O(2)) generated by peroxisomal oxidases to water and oxygen, thereby protecting cells from the toxic effects of hydrogen peroxide. The sequence is that of Catalase A (catA) from Emericella nidulans (strain FGSC A4 / ATCC 38163 / CBS 112.46 / NRRL 194 / M139) (Aspergillus nidulans).